Consider the following 293-residue polypeptide: MGLISNPTRLILVATIFFLVSSISGQDSVVENNERQESEGSGKELGRRGMVGTERIGVDTVVDNIGALGLNLDLDATAPSVFDALFSSFSMILVTEIGDETFIIAALMAMRHPKATVLSGALSALFVMTILSTGLGRIVPNLISRKHTNSAATVLYAFFGLRLLYIAWRSTDSKSNQKKEMEEVEEKLESGQGKTPFRRLFSRFCTPIFLESFILTFLAEWGDRSQIATIALATHKNAIGVAIGASIGHTVCTSLAVVGGSMLASRISQRTVATVGGLLFLGFSVSSYFYPPL.

A signal peptide spans 1 to 25 (MGLISNPTRLILVATIFFLVSSISG). Transmembrane regions (helical) follow at residues 89-109 (FSMI…ALMA), 115-135 (ATVL…STGL), 148-168 (TNSA…YIAW), 200-220 (LFSR…FLAE), 238-258 (AIGV…LAVV), and 272-292 (VATV…FYPP).

It belongs to the GDT1 family.

It is found in the membrane. This Arabidopsis thaliana (Mouse-ear cress) protein is GDT1-like protein 3.